The following is a 311-amino-acid chain: Glutamyl-Q tRNA(Asp) synthetase (311 aa).

L-glutamate contacts are provided by residues R14–S18 and E50. Residues P17 to N27 carry the 'HIGH' region motif. The Zn(2+) site is built by C104, C106, Y125, and C129. L-glutamate is bound by residues Y186 and R204. Residues R242–R246 carry the 'KMSKS' region motif. K245 contributes to the ATP binding site.

This sequence belongs to the class-I aminoacyl-tRNA synthetase family. GluQ subfamily. It depends on Zn(2+) as a cofactor.

In terms of biological role, catalyzes the tRNA-independent activation of glutamate in presence of ATP and the subsequent transfer of glutamate onto a tRNA(Asp). Glutamate is transferred on the 2-amino-5-(4,5-dihydroxy-2-cyclopenten-1-yl) moiety of the queuosine in the wobble position of the QUC anticodon. This chain is Glutamyl-Q tRNA(Asp) synthetase, found in Nocardia farcinica (strain IFM 10152).